Here is a 684-residue protein sequence, read N- to C-terminus: Ubinuclein-1 (684 aa).

5 disordered regions span residues 108–137 (YKGNDSSDGEELDGAPDDDEYDTEDSFIDD), 157–287 (YVNR…LGKS), 311–332 (NVTGSRQSSQASKKDGSNVKSK), 609–631 (MVDRSNQQQPEKLKGISSSCNPT), and 660–684 (PQTRVIPAPQNLNIPRTTPDLNLPS). Residues 114–137 (SDGEELDGAPDDDEYDTEDSFIDD) show a composition bias toward acidic residues. Composition is skewed to basic and acidic residues over residues 157-167 (YVNRGKLERME) and 184-199 (SAKPCRDAVDVSDKHT). The span at 211–235 (STAPGSWKTQESPLPSGAQDANTSV) shows a compositional bias: polar residues. Residues 238–260 (DDVKHSDRANHQSRNDTSHKSRE) show a composition bias toward basic and acidic residues. Polar residues-rich tracts occupy residues 261-284 (TGSSSALHQKYSNKSLHQQSTSLL), 311-321 (NVTGSRQSSQA), 611-631 (DRSNQQQPEKLKGISSSCNPT), and 669-684 (QNLNIPRTTPDLNLPS).

Belongs to the ubinuclein family. As to quaternary structure, component of the HIRA complex made of UBN1, UBN2, ASF1A, CABIN1 and HIRA. Interacts with HIRA.

Its subcellular location is the nucleus. The protein localises to the nucleolus. Functionally, may be required for replication-independent chromatin assembly. The protein is Ubinuclein-1 of Arabidopsis thaliana (Mouse-ear cress).